Consider the following 99-residue polypeptide: Sm-like protein LSM7 (99 aa).

A Sm domain is found at 6-86; it reads ETVLDLAKFV…VMLVSPTDGT (81 aa).

This sequence belongs to the snRNP Sm proteins family. Component of the heptameric LSM1-LSM7 complex that forms a seven-membered ring structure with a donut shape. The LSM subunits are arranged in the order LSM1, LSM2, LSM3, LSM6, LSM5, LSM7 and LSM4. Component of the heptameric LSM2-LSM8 complex that forms a seven-membered ring structure with a donut shape. The LSM subunits are arranged in the order LSM8, LSM2, LSM3, LSM6, LSM5, LSM7 and LSM4. LSM7 subunit interacts only with its two neighboring subunits, LSM5 and LSM4. As to expression, expressed in roots, leaves, stems, flowers and siliques.

The protein resides in the cytoplasm. It localises to the nucleus. Component of LSM protein complexes, which are involved in RNA processing. Component of the cytoplasmic LSM1-LSM7 complex which is involved in mRNA degradation by promoting decapping and leading to accurate 5'-3' mRNA decay. The cytoplasmic LSM1-LSM7 complex regulates developmental gene expression by the decapping of specific development-related transcripts. Component of the nuclear LSM2-LSM8 complex which is involved splicing nuclear mRNAs. LSM2-LSM8 binds directly to the U6 small nuclear RNAs (snRNAs) and is essential for accurate splicing of selected development-related mRNAs through the stabilization of the spliceosomal U6 snRNA. Plays a critical role in the regulation of development-related gene expression. The sequence is that of Sm-like protein LSM7 from Arabidopsis thaliana (Mouse-ear cress).